A 1620-amino-acid polypeptide reads, in one-letter code: NAD-specific glutamate dehydrogenase (1620 aa).

Lysine 851 is an active-site residue.

Belongs to the Glu/Leu/Phe/Val dehydrogenases family. Homotetramer. In terms of processing, contains disulfide bonds (interchain).

The enzyme catalyses L-glutamate + NAD(+) + H2O = 2-oxoglutarate + NH4(+) + NADH + H(+). Activity subject to allosteric control by arginine and citrate, which function as positive and negative effectors, respectively. Involved in arginine catabolism by converting L-glutamate, into 2-oxoglutarate, which is then channeled into the tricarboxylic acid cycle. Can also utilize other amino acids of the glutamate family. This Pseudomonas aeruginosa (strain ATCC 15692 / DSM 22644 / CIP 104116 / JCM 14847 / LMG 12228 / 1C / PRS 101 / PAO1) protein is NAD-specific glutamate dehydrogenase (gdhB).